The sequence spans 144 residues: Small ribosomal subunit protein bS16 (144 aa).

Positions 115–144 (NEPVAEAVTPKKKAKKDDAAAESTEAEAAE) are disordered.

This sequence belongs to the bacterial ribosomal protein bS16 family.

The protein is Small ribosomal subunit protein bS16 of Nocardia farcinica (strain IFM 10152).